We begin with the raw amino-acid sequence, 292 residues long: MLRVLCLLRPWRPLRARGCASDGAAGGSEIQVRALAGPDQGITEILMNRPSARNALGNVFVSELLETLAQLREDRQVRVLLFRSGVKGVFCAGADLKEREQMSEAEVGVFVQRLRGLMNDIAAFPAPTIAAMDGFALGGGLELALACDLRVAASSAVMGLIETTRGLLPGAGGTQRLPRCLGVALAKELIFTGRRLSGTEAHVLGLVNHAVAQNEEGDAAYQRARALAQEILPQAPIAVRLGKVAIDRGTEVDIASGMAIEGMCYAQNIPTRDRLEGMAAFREKRTPKFVGK.

The N-terminal 35 residues, 1 to 35 (MLRVLCLLRPWRPLRARGCASDGAAGGSEIQVRAL), are a transit peptide targeting the mitochondrion. Lys-97 carries the N6-acetyllysine; alternate modification. Lys-97 bears the N6-succinyllysine; alternate mark.

This sequence belongs to the enoyl-CoA hydratase/isomerase family.

It is found in the mitochondrion. In Homo sapiens (Human), this protein is Enoyl-CoA hydratase domain-containing protein 2, mitochondrial (ECHDC2).